We begin with the raw amino-acid sequence, 118 residues long: Small ribosomal subunit protein uS13 (118 aa).

Residues 94 to 118 (NLPVRGQNTKNNARTRKGPIRSIKR) are disordered. Residues 106-118 (ARTRKGPIRSIKR) show a composition bias toward basic residues.

It belongs to the universal ribosomal protein uS13 family. Part of the 30S ribosomal subunit. Forms a loose heterodimer with protein S19. Forms two bridges to the 50S subunit in the 70S ribosome.

Located at the top of the head of the 30S subunit, it contacts several helices of the 16S rRNA. In the 70S ribosome it contacts the 23S rRNA (bridge B1a) and protein L5 of the 50S subunit (bridge B1b), connecting the 2 subunits; these bridges are implicated in subunit movement. Contacts the tRNAs in the A and P-sites. In Psychrobacter sp. (strain PRwf-1), this protein is Small ribosomal subunit protein uS13.